The primary structure comprises 119 residues: MGRFVAVALLVLLSLSGLETIQHAPKIQVYSRHPAENGKPNFLNCYVSGFHPSDIEVDLLKNGKKIEKVEHSDLSFSKDWSFYLLYYTEFTPNEKDEYACRVSHVTFSTPKTVKWDRNM.

Positions 1–20 (MGRFVAVALLVLLSLSGLET) are cleaved as a signal peptide. An Ig-like C1-type domain is found at 25 to 114 (PKIQVYSRHP…VTFSTPKTVK (90 aa)). Cysteines 45 and 100 form a disulfide.

Belongs to the beta-2-microglobulin family. In terms of assembly, heterodimer of an alpha chain and a beta chain. Beta-2-microglobulin is the beta-chain of major histocompatibility complex class I molecules.

Its subcellular location is the secreted. Component of the class I major histocompatibility complex (MHC). Involved in the presentation of peptide antigens to the immune system. This is Beta-2-microglobulin (B2M) from Callicebus personatus nigrifrons (Black-fronted titi).